A 233-amino-acid chain; its full sequence is Large ribosomal subunit protein uL1 (233 aa).

It belongs to the universal ribosomal protein uL1 family. In terms of assembly, part of the 50S ribosomal subunit.

Binds directly to 23S rRNA. The L1 stalk is quite mobile in the ribosome, and is involved in E site tRNA release. Functionally, protein L1 is also a translational repressor protein, it controls the translation of the L11 operon by binding to its mRNA. The polypeptide is Large ribosomal subunit protein uL1 (Laribacter hongkongensis (strain HLHK9)).